The primary structure comprises 1034 residues: Condensin complex subunit 3 (1034 aa).

7 HEAT repeats span residues 95 to 132 (SPVN…NLPE), 139 to 176 (DLFD…PSDP), 178 to 213 (CPVS…SLPK), 242 to 279 (LTIA…QYSE), 281 to 317 (DVLD…LVQN), 439 to 476 (TSLI…PIVT), and 618 to 655 (DFAR…LFGM). Positions 663–672 (TNPDDSQCKA) are enriched in polar residues. Positions 663-693 (TNPDDSQCKAQENADEDISEQEKPGSVDENL) are disordered. 3 HEAT repeats span residues 703–740 (ATVN…SGRL), 785–823 (CFAE…DLTR), and 878–915 (ENST…SGRE). Residues 909–949 (QLRSGREEHRVSKETEPQVSKETEDRTNLQENEEGKQKDEA) show a composition bias toward basic and acidic residues. The interval 909 to 1034 (QLRSGREEHR…LSKLLNEEAN (126 aa)) is disordered. A compositionally biased stretch (basic residues) spans 964-984 (RGKATKGRRKGPAAAATRRKA). A compositionally biased stretch (basic and acidic residues) spans 985 to 999 (SKAEEAEAEMERQEE).

This sequence belongs to the CND3 (condensin subunit 3) family. In terms of assembly, component of the condensin complex, which contains the XCAP-E/SMC2 and XCAP-C/SMC4 heterodimer, and three non SMC subunits that probably regulate the complex: XCAP-H/NCAPH, XCAP-D2/NCAPD2 and XCAP-G/NCAPG. Post-translationally, phosphorylated by cdk1. Its phosphorylation, as well as that of XCAP-D2 and XCAP-H subunits, activates the condensin complex and is required for chromosome condensation.

The protein localises to the nucleus. It is found in the cytoplasm. Its subcellular location is the chromosome. Its function is as follows. Regulatory subunit of the condensin complex, a complex required for conversion of interphase chromatin into mitotic-like condense chromosomes. The condensin complex probably introduces positive supercoils into relaxed DNA in the presence of type I topoisomerases and converts nicked DNA into positive knotted forms in the presence of type II topoisomerase. The polypeptide is Condensin complex subunit 3 (ncapg) (Xenopus laevis (African clawed frog)).